Here is a 413-residue protein sequence, read N- to C-terminus: MKQYKILFFIADGLGDRPVRKLQGKTPLEYVDKPNIRELLKNSIIGLMDPISPGVVAGSDTSHLSMFGLDPHKYYRGRGAFEAIGAGARLKASDVAFRGNFATVNNEFIVVDRRAGRKIEEADDLVKELNEKIGEIDGVKVRFYHGTEHRVAVVLSGKGLTDKVSDTDPHEVNKKVLESKPLDNSPESQFTANIINKLTRKIYEILNSSEINKIRVSKGELPANIILLRGAAEFVELPQFESYTKLKAAAVSATALIKGICEQIGMRVVTPPGATGGLDTNYLGKADAAVELLKEYDFVFLHLKATDAASHDGNVDGKVYAINKMDEMIGRILDKLGSELVIAISGDHTTPVEVKEHTGDPVPFLLYVPYDIINDVVNDFNEREARRGSLRIRGLDVINLLLNYSNRAEKYGA.

It belongs to the BPG-independent phosphoglycerate mutase family. A-PGAM subfamily.

It catalyses the reaction (2R)-2-phosphoglycerate = (2R)-3-phosphoglycerate. It participates in carbohydrate degradation; glycolysis; pyruvate from D-glyceraldehyde 3-phosphate: step 3/5. Its function is as follows. Catalyzes the interconversion of 2-phosphoglycerate and 3-phosphoglycerate. The protein is 2,3-bisphosphoglycerate-independent phosphoglycerate mutase of Sulfurisphaera tokodaii (strain DSM 16993 / JCM 10545 / NBRC 100140 / 7) (Sulfolobus tokodaii).